We begin with the raw amino-acid sequence, 337 residues long: Tetraacyldisaccharide 4'-kinase (337 aa).

Position 55 to 62 (55 to 62 (TAGGNGKT)) interacts with ATP.

This sequence belongs to the LpxK family.

It catalyses the reaction a lipid A disaccharide + ATP = a lipid IVA + ADP + H(+). The protein operates within glycolipid biosynthesis; lipid IV(A) biosynthesis; lipid IV(A) from (3R)-3-hydroxytetradecanoyl-[acyl-carrier-protein] and UDP-N-acetyl-alpha-D-glucosamine: step 6/6. Its function is as follows. Transfers the gamma-phosphate of ATP to the 4'-position of a tetraacyldisaccharide 1-phosphate intermediate (termed DS-1-P) to form tetraacyldisaccharide 1,4'-bis-phosphate (lipid IVA). In Sodalis glossinidius (strain morsitans), this protein is Tetraacyldisaccharide 4'-kinase.